We begin with the raw amino-acid sequence, 312 residues long: DNA primase small subunit PriS (312 aa).

Catalysis depends on residues Asp-88, Asp-90, and Asp-215.

It belongs to the eukaryotic-type primase small subunit family. Heterodimer of a small subunit (PriS) and a large subunit (PriL). Mg(2+) serves as cofactor. The cofactor is Mn(2+).

In terms of biological role, catalytic subunit of DNA primase, an RNA polymerase that catalyzes the synthesis of short RNA molecules used as primers for DNA polymerase during DNA replication. The small subunit contains the primase catalytic core and has DNA synthesis activity on its own. Binding to the large subunit stabilizes and modulates the activity, increasing the rate of DNA synthesis while decreasing the length of the DNA fragments, and conferring RNA synthesis capability. The DNA polymerase activity may enable DNA primase to also catalyze primer extension after primer synthesis. May also play a role in DNA repair. This chain is DNA primase small subunit PriS, found in Pyrobaculum aerophilum (strain ATCC 51768 / DSM 7523 / JCM 9630 / CIP 104966 / NBRC 100827 / IM2).